Here is a 225-residue protein sequence, read N- to C-terminus: Cell division protein SepF (225 aa).

The tract at residues 21–134 is disordered; that stretch reads DEYLDEPEPT…GPLFDEGGPL (114 aa). Basic and acidic residues-rich tracts occupy residues 28 to 54, 77 to 86, and 115 to 127; these read EPTR…RDFA, RYESPRHSSR, and TRSD…RGPL.

It belongs to the SepF family. In terms of assembly, homodimer. Interacts with FtsZ.

It localises to the cytoplasm. In terms of biological role, cell division protein that is part of the divisome complex and is recruited early to the Z-ring. Probably stimulates Z-ring formation, perhaps through the cross-linking of FtsZ protofilaments. Its function overlaps with FtsA. This Rhodococcus opacus (strain B4) protein is Cell division protein SepF.